A 98-amino-acid chain; its full sequence is NADH-ubiquinone oxidoreductase chain 4L (98 aa).

Helical transmembrane passes span 1–21 (MTMVYANIFLAFITSLMGLLM), 29–49 (SLLCLEGMMLSLFVMMTVTIL), and 61–81 (IVLLVFAACEAALGLSLLVMV).

The protein belongs to the complex I subunit 4L family. Core subunit of respiratory chain NADH dehydrogenase (Complex I) which is composed of 45 different subunits.

Its subcellular location is the mitochondrion inner membrane. It carries out the reaction a ubiquinone + NADH + 5 H(+)(in) = a ubiquinol + NAD(+) + 4 H(+)(out). Its function is as follows. Core subunit of the mitochondrial membrane respiratory chain NADH dehydrogenase (Complex I) which catalyzes electron transfer from NADH through the respiratory chain, using ubiquinone as an electron acceptor. Part of the enzyme membrane arm which is embedded in the lipid bilayer and involved in proton translocation. The protein is NADH-ubiquinone oxidoreductase chain 4L (MT-ND4L) of Monachus monachus (Mediterranean monk seal).